Consider the following 644-residue polypeptide: Chaperone protein DnaK (644 aa).

2 disordered regions span residues 490-533 and 570-644; these read QEEA…ELDD and EELQ…EDDA. The span at 492–513 shows a compositional bias: basic and acidic residues; sequence EAEKHKEEDEARRERIEARNEA. The span at 523 to 533 shows a compositional bias: acidic residues; the sequence is LLEENEEELDD. The span at 588–622 shows a compositional bias: gly residues; that stretch reads GPGGAGGAAGAGPGGMGGMGGAAGPGGAGGAGPGG. Over residues 624–644 the composition is skewed to acidic residues; the sequence is DADDEEYVDADFEDVDDEDDA.

The protein belongs to the heat shock protein 70 family.

Acts as a chaperone. The polypeptide is Chaperone protein DnaK (Halorubrum lacusprofundi (strain ATCC 49239 / DSM 5036 / JCM 8891 / ACAM 34)).